Here is a 195-residue protein sequence, read N- to C-terminus: Lipid A acyltransferase PagP (195 aa).

Positions 1–30 are cleaved as a signal peptide; the sequence is MRLTLTSRSRLFVLSSLLFISTFDVLSAQA. Residues histidine 67, aspartate 110, and serine 111 contribute to the active site.

The protein belongs to the lipid A palmitoyltransferase family. In terms of assembly, homodimer.

It localises to the cell outer membrane. It catalyses the reaction a lipid A + a 1,2-diacyl-sn-glycero-3-phosphocholine = a hepta-acyl lipid A + a 2-acyl-sn-glycero-3-phosphocholine. The enzyme catalyses a lipid IVA + a 1,2-diacyl-sn-glycero-3-phosphocholine = a lipid IVB + a 2-acyl-sn-glycero-3-phosphocholine. It carries out the reaction a lipid IIA + a 1,2-diacyl-sn-glycero-3-phosphocholine = a lipid IIB + a 2-acyl-sn-glycero-3-phosphocholine. Transfers a fatty acid residue from the sn-1 position of a phospholipid to the N-linked hydroxyfatty acid chain on the proximal unit of lipid A or its precursors. This Dickeya chrysanthemi (strain Ech1591) (Dickeya zeae (strain Ech1591)) protein is Lipid A acyltransferase PagP.